Here is a 253-residue protein sequence, read N- to C-terminus: Maleate isomerase (253 aa).

Substrate-binding positions include N14, 80 to 82 (CLV), Y137, and N167. C80 functions as the Nucleophile in the catalytic mechanism. C80 carries the post-translational modification S-(2-succinyl)cysteine. The active-site Proton donor is C198. A substrate-binding site is contributed by 199-200 (VQ).

It belongs to the maleate isomerase family. In terms of assembly, homodimer.

It carries out the reaction maleate = fumarate. In terms of biological role, catalyzes cis-trans isomerization of the C2-C3 double bond in maleate to yield fumarate. The sequence is that of Maleate isomerase from Alcaligenes faecalis.